We begin with the raw amino-acid sequence, 149 residues long: Endoribonuclease YbeY (149 aa).

Zn(2+) is bound by residues histidine 101, histidine 105, and histidine 111.

Belongs to the endoribonuclease YbeY family. The cofactor is Zn(2+).

The protein localises to the cytoplasm. Single strand-specific metallo-endoribonuclease involved in late-stage 70S ribosome quality control and in maturation of the 3' terminus of the 16S rRNA. This Thermotoga neapolitana (strain ATCC 49049 / DSM 4359 / NBRC 107923 / NS-E) protein is Endoribonuclease YbeY.